The primary structure comprises 245 residues: Ribonuclease PH (245 aa).

Phosphate is bound by residues R93 and 131 to 133 (GTR).

It belongs to the RNase PH family. Homohexameric ring arranged as a trimer of dimers.

It catalyses the reaction tRNA(n+1) + phosphate = tRNA(n) + a ribonucleoside 5'-diphosphate. Its function is as follows. Phosphorolytic 3'-5' exoribonuclease that plays an important role in tRNA 3'-end maturation. Removes nucleotide residues following the 3'-CCA terminus of tRNAs; can also add nucleotides to the ends of RNA molecules by using nucleoside diphosphates as substrates, but this may not be physiologically important. Probably plays a role in initiation of 16S rRNA degradation (leading to ribosome degradation) during starvation. The protein is Ribonuclease PH of Corynebacterium glutamicum (strain ATCC 13032 / DSM 20300 / JCM 1318 / BCRC 11384 / CCUG 27702 / LMG 3730 / NBRC 12168 / NCIMB 10025 / NRRL B-2784 / 534).